Here is a 542-residue protein sequence, read N- to C-terminus: Protein XP55 (542 aa).

A signal peptide spans 1–33 (MTARRTRWTRRTDRSLPIRSAAAAVAFAAGATA). C34 carries N-palmitoyl cysteine lipidation. C34 carries the S-diacylglycerol cysteine lipid modification. Residues 519-542 (LEGRTNTASPAGPGGTSRTGGRKK) are disordered.

This sequence belongs to the bacterial solute-binding protein 5 family.

The protein resides in the cell membrane. Required for transport of an unidentified substrate. In Streptomyces lividans, this protein is Protein XP55 (xp55).